A 258-amino-acid polypeptide reads, in one-letter code: Type III pantothenate kinase 1 (258 aa).

6 to 13 (DMGNSHIH) is an ATP binding site. Residue 107-110 (GADR) coordinates substrate. D109 serves as the catalytic Proton acceptor. D130 serves as a coordination point for K(+). T133 is an ATP binding site. T185 provides a ligand contact to substrate.

It belongs to the type III pantothenate kinase family. Homodimer. Requires NH4(+) as cofactor. K(+) is required as a cofactor.

It localises to the cytoplasm. It catalyses the reaction (R)-pantothenate + ATP = (R)-4'-phosphopantothenate + ADP + H(+). It participates in cofactor biosynthesis; coenzyme A biosynthesis; CoA from (R)-pantothenate: step 1/5. Its function is as follows. Catalyzes the phosphorylation of pantothenate (Pan), the first step in CoA biosynthesis. This Francisella tularensis subsp. tularensis (strain FSC 198) protein is Type III pantothenate kinase 1.